Reading from the N-terminus, the 119-residue chain is Small ribosomal subunit protein bS6 (119 aa).

Residues 96–119 are disordered; it reads VTEPSPLARSQEKDEEEGGRTAEA.

The protein belongs to the bacterial ribosomal protein bS6 family.

Functionally, binds together with bS18 to 16S ribosomal RNA. The sequence is that of Small ribosomal subunit protein bS6 from Alkalilimnicola ehrlichii (strain ATCC BAA-1101 / DSM 17681 / MLHE-1).